A 320-amino-acid polypeptide reads, in one-letter code: ATP-dependent 6-phosphofructokinase (320 aa).

Position 11 (glycine 11) interacts with ATP. 21-25 (RAIAR) contacts ADP. Residues 72 to 73 (RF) and 102 to 105 (GDGS) contribute to the ATP site. Aspartate 103 is a binding site for Mg(2+). Residues 125-127 (TID), arginine 162, and 169-171 (MGR) contribute to the substrate site. Residue aspartate 127 is the Proton acceptor of the active site. Residues 185 to 187 (GAD) and 213 to 215 (KDH) each bind ADP. Residues glutamate 222, arginine 243, and 249-252 (HIQR) each bind substrate.

It belongs to the phosphofructokinase type A (PFKA) family. ATP-dependent PFK group I subfamily. Prokaryotic clade 'B1' sub-subfamily. In terms of assembly, homotetramer. Requires Mg(2+) as cofactor.

It localises to the cytoplasm. The enzyme catalyses beta-D-fructose 6-phosphate + ATP = beta-D-fructose 1,6-bisphosphate + ADP + H(+). It participates in carbohydrate degradation; glycolysis; D-glyceraldehyde 3-phosphate and glycerone phosphate from D-glucose: step 3/4. With respect to regulation, allosterically activated by ADP and other diphosphonucleosides, and allosterically inhibited by phosphoenolpyruvate. In terms of biological role, catalyzes the phosphorylation of D-fructose 6-phosphate to fructose 1,6-bisphosphate by ATP, the first committing step of glycolysis. The polypeptide is ATP-dependent 6-phosphofructokinase (Ligilactobacillus salivarius (strain UCC118) (Lactobacillus salivarius)).